The primary structure comprises 220 residues: Ribonuclease HII (220 aa).

The RNase H type-2 domain occupies 27–220 (CIIVGVDEVG…SKISYMFKNS (194 aa)). A divalent metal cation-binding residues include aspartate 33, glutamate 34, and aspartate 128.

Belongs to the RNase HII family. It depends on Mn(2+) as a cofactor. Mg(2+) serves as cofactor.

It localises to the cytoplasm. The enzyme catalyses Endonucleolytic cleavage to 5'-phosphomonoester.. Endonuclease that specifically degrades the RNA of RNA-DNA hybrids. This chain is Ribonuclease HII, found in Ehrlichia ruminantium (strain Gardel).